The primary structure comprises 247 residues: Cell division protein ZapD (247 aa).

It belongs to the ZapD family. In terms of assembly, interacts with FtsZ.

Its subcellular location is the cytoplasm. In terms of biological role, cell division factor that enhances FtsZ-ring assembly. Directly interacts with FtsZ and promotes bundling of FtsZ protofilaments, with a reduction in FtsZ GTPase activity. The protein is Cell division protein ZapD of Klebsiella pneumoniae (strain 342).